A 160-amino-acid polypeptide reads, in one-letter code: Probable nucleoside diphosphate kinase DDB_G0292928 (160 aa).

Positions 12, 61, 103, 109, 122, and 132 each coordinate ATP. His135 serves as the catalytic Pros-phosphohistidine intermediate.

The protein belongs to the NDK family. Mg(2+) serves as cofactor.

The catalysed reaction is a 2'-deoxyribonucleoside 5'-diphosphate + ATP = a 2'-deoxyribonucleoside 5'-triphosphate + ADP. It carries out the reaction a ribonucleoside 5'-diphosphate + ATP = a ribonucleoside 5'-triphosphate + ADP. The chain is Probable nucleoside diphosphate kinase DDB_G0292928 from Dictyostelium discoideum (Social amoeba).